We begin with the raw amino-acid sequence, 162 residues long: NADH-quinone oxidoreductase subunit I (162 aa).

2 4Fe-4S ferredoxin-type domains span residues 54 to 83 and 93 to 122; these read RRYE…IESE and TRYD…ETQI. Residues Cys-63, Cys-66, Cys-69, Cys-73, Cys-102, Cys-105, Cys-108, and Cys-112 each coordinate [4Fe-4S] cluster.

Belongs to the complex I 23 kDa subunit family. In terms of assembly, NDH-1 is composed of 14 different subunits. Subunits NuoA, H, J, K, L, M, N constitute the membrane sector of the complex. The cofactor is [4Fe-4S] cluster.

The protein resides in the cell inner membrane. The catalysed reaction is a quinone + NADH + 5 H(+)(in) = a quinol + NAD(+) + 4 H(+)(out). Its function is as follows. NDH-1 shuttles electrons from NADH, via FMN and iron-sulfur (Fe-S) centers, to quinones in the respiratory chain. The immediate electron acceptor for the enzyme in this species is believed to be ubiquinone. Couples the redox reaction to proton translocation (for every two electrons transferred, four hydrogen ions are translocated across the cytoplasmic membrane), and thus conserves the redox energy in a proton gradient. In Burkholderia cenocepacia (strain ATCC BAA-245 / DSM 16553 / LMG 16656 / NCTC 13227 / J2315 / CF5610) (Burkholderia cepacia (strain J2315)), this protein is NADH-quinone oxidoreductase subunit I.